The following is a 224-amino-acid chain: UPF0319 protein VC_1853 (224 aa).

A signal peptide spans 1 to 21; that stretch reads MKLNPLILGLLLSFSAGHSLA.

Belongs to the UPF0319 family.

The chain is UPF0319 protein VC_1853 from Vibrio cholerae serotype O1 (strain ATCC 39315 / El Tor Inaba N16961).